The sequence spans 286 residues: Prepilin leader peptidase/N-methyltransferase (286 aa).

Residues 11 to 31 traverse the membrane as a helical segment; the sequence is LGIFFVGLFSLMVGSFLNVVI. Positions 74, 77, 99, and 102 each coordinate Zn(2+). Helical transmembrane passes span 106 to 126, 132 to 152, 161 to 181, 185 to 205, 231 to 251, and 257 to 277; these read ISAR…IVAF, LSLG…FIDA, LTLP…FINL, VIGA…FKLI, LPII…GIGL, and MPFG…GAQI.

This sequence belongs to the peptidase A24 family. Zn(2+) serves as cofactor.

Its subcellular location is the cell inner membrane. The enzyme catalyses Typically cleaves a -Gly-|-Phe- bond to release an N-terminal, basic peptide of 5-8 residues from type IV prepilin, and then N-methylates the new N-terminal amino group, the methyl donor being S-adenosyl-L-methionine.. Plays an essential role in type IV pili and type II pseudopili formation by proteolytically removing the leader sequence from substrate proteins and subsequently monomethylating the alpha-amino group of the newly exposed N-terminal phenylalanine. The sequence is that of Prepilin leader peptidase/N-methyltransferase (fimP) from Dichelobacter nodosus (Bacteroides nodosus).